The primary structure comprises 120 residues: UPF0102 protein PST_1070 (120 aa).

Belongs to the UPF0102 family.

The polypeptide is UPF0102 protein PST_1070 (Stutzerimonas stutzeri (strain A1501) (Pseudomonas stutzeri)).